The chain runs to 179 residues: ATP synthase subunit delta (179 aa).

The protein belongs to the ATPase delta chain family. F-type ATPases have 2 components, F(1) - the catalytic core - and F(0) - the membrane proton channel. F(1) has five subunits: alpha(3), beta(3), gamma(1), delta(1), epsilon(1). F(0) has three main subunits: a(1), b(2) and c(10-14). The alpha and beta chains form an alternating ring which encloses part of the gamma chain. F(1) is attached to F(0) by a central stalk formed by the gamma and epsilon chains, while a peripheral stalk is formed by the delta and b chains.

Its subcellular location is the cell membrane. Its function is as follows. F(1)F(0) ATP synthase produces ATP from ADP in the presence of a proton or sodium gradient. F-type ATPases consist of two structural domains, F(1) containing the extramembraneous catalytic core and F(0) containing the membrane proton channel, linked together by a central stalk and a peripheral stalk. During catalysis, ATP synthesis in the catalytic domain of F(1) is coupled via a rotary mechanism of the central stalk subunits to proton translocation. This protein is part of the stalk that links CF(0) to CF(1). It either transmits conformational changes from CF(0) to CF(1) or is implicated in proton conduction. The polypeptide is ATP synthase subunit delta (Clostridium beijerinckii (strain ATCC 51743 / NCIMB 8052) (Clostridium acetobutylicum)).